Here is a 409-residue protein sequence, read N- to C-terminus: Homoserine O-succinyltransferase (409 aa).

Positions 43–380 constitute an AB hydrolase-1 domain; it reads NAIVVCHALN…PHGHDAFLLD (338 aa). Catalysis depends on Ser-149, which acts as the Nucleophile. Arg-219 is a binding site for substrate. The interval 244 to 268 is disordered; it reads TLPAARGSLPPEGTDPTRGGPASDR. Active-site residues include Asp-341 and His-374. Asp-375 serves as a coordination point for substrate.

This sequence belongs to the AB hydrolase superfamily. MetX family. Homodimer.

The protein localises to the cytoplasm. The enzyme catalyses L-homoserine + succinyl-CoA = O-succinyl-L-homoserine + CoA. It functions in the pathway amino-acid biosynthesis; L-methionine biosynthesis via de novo pathway; O-succinyl-L-homoserine from L-homoserine: step 1/1. In terms of biological role, transfers a succinyl group from succinyl-CoA to L-homoserine, forming succinyl-L-homoserine. The sequence is that of Homoserine O-succinyltransferase from Comamonas testosteroni (strain DSM 14576 / KF-1) (Pseudomonas testosteroni).